The sequence spans 433 residues: Acetyl-CoA-benzylalcohol acetyltransferase (433 aa).

Catalysis depends on proton acceptor residues His152 and Asp377.

It belongs to the plant acyltransferase family. Post-translationally, the N-terminus is blocked. In terms of tissue distribution, expressed in petals, style, sepals and stamens. Very low expression in stigma and not detected in leaves.

The enzyme catalyses benzyl alcohol + acetyl-CoA = benzyl acetate + CoA. It catalyses the reaction (E)-cinnamyl alcohol + acetyl-CoA = (E)-cinnamyl acetate + CoA. In terms of biological role, involved in the biosynthesis of benzyl acetate, a major constituent of the floral scent. Can use benzylalcohol, cinnamylalcohol, 3-cis-hexene-1-ol or heptanol as substrates. Has some activity with 2-phenylethanol and 2-naphtalene-ethanol, but no activity with linalool, 2-hydroxybenzylalcohol, 3-hydroxybenzylalcohol or 4-hydroxybenzylalcohol. This chain is Acetyl-CoA-benzylalcohol acetyltransferase (BEAT), found in Clarkia breweri (Fairy fans).